Reading from the N-terminus, the 599-residue chain is UvrABC system protein C (599 aa).

The region spanning 19–95 is the GIY-YIG domain; the sequence is ESTGVYIFYD…IKKYRPIMNV (77 aa). The UVR domain occupies 206–241; sequence EEIIEKLYDQMQEYSKNLEFEKAAKIRDKIRLLQNL.

The protein belongs to the UvrC family. In terms of assembly, interacts with UvrB in an incision complex.

It localises to the cytoplasm. Its function is as follows. The UvrABC repair system catalyzes the recognition and processing of DNA lesions. UvrC both incises the 5' and 3' sides of the lesion. The N-terminal half is responsible for the 3' incision and the C-terminal half is responsible for the 5' incision. The sequence is that of UvrABC system protein C from Dictyoglomus thermophilum (strain ATCC 35947 / DSM 3960 / H-6-12).